Consider the following 302-residue polypeptide: Riboflavin transporter (302 aa).

The next 8 helical transmembrane spans lie at 16–36, 44–64, 87–107, 109–129, 158–178, 191–213, 227–247, and 264–284; these read AVVGALWMVLAGIAFSLLNVV, LAFPSASAAFWQYGFAFLFSL, VVLAALGVEAWVAGLAAVPIW, AIALVMTSPFFIILGARLFLG, IGWAALLPVLSALLWGASSLI, ITVWLLVLLTPINGGLALAAGFA, GLLTAVAQYFLTLAYAAADAA, and GWLFFGYAPAGYLWLGAALIL. 2 EamA domains span residues 30 to 151 and 170 to 291; these read FSLL…MIIL and LLWG…LFIM.

Belongs to the drug/metabolite transporter (DMT) superfamily. 10 TMS drug/metabolite exporter (DME) (TC 2.A.7.3) family.

The protein resides in the cell membrane. In terms of biological role, transports riboflavin into the cell. Can also transport FMN and FAD. Required for normal nodule development during colonization of pea plant roots. This Rhizobium johnstonii (strain DSM 114642 / LMG 32736 / 3841) (Rhizobium leguminosarum bv. viciae) protein is Riboflavin transporter.